Consider the following 921-residue polypeptide: Isoleucine--tRNA ligase 1 (921 aa).

The 'HIGH' region signature appears at 57–67; sequence PYANGDIHMGH. Glutamate 552 serves as a coordination point for L-isoleucyl-5'-AMP. The short motif at 593–597 is the 'KMSKS' region element; it reads KMSKS. Lysine 596 lines the ATP pocket. Zn(2+) is bound by residues cysteine 888, cysteine 891, cysteine 908, and cysteine 911.

It belongs to the class-I aminoacyl-tRNA synthetase family. IleS type 1 subfamily. Monomer. The cofactor is Zn(2+).

It localises to the cytoplasm. The catalysed reaction is tRNA(Ile) + L-isoleucine + ATP = L-isoleucyl-tRNA(Ile) + AMP + diphosphate. Its function is as follows. Catalyzes the attachment of isoleucine to tRNA(Ile). As IleRS can inadvertently accommodate and process structurally similar amino acids such as valine, to avoid such errors it has two additional distinct tRNA(Ile)-dependent editing activities. One activity is designated as 'pretransfer' editing and involves the hydrolysis of activated Val-AMP. The other activity is designated 'posttransfer' editing and involves deacylation of mischarged Val-tRNA(Ile). In Bacillus cereus (strain ATCC 10987 / NRS 248), this protein is Isoleucine--tRNA ligase 1.